Reading from the N-terminus, the 165-residue chain is MEKLIERIIYASRWLMFPVYIGLSLGFILLTLKFFQQIIFVIPKILMMSESGLVLVVLSLIDISLVGGLLVMVMFSGYENFISKMEIKTDKKKLGWMGTMDVNSIKNKVASSIVAISSVHSLRLFMDAEKISNDQIMWCVLIHLTFVISAFGMACIDKMSKRGYS.

A run of 3 helical transmembrane segments spans residues 10-32 (YASR…LLTL), 53-75 (LVLV…MVMF), and 134-156 (DQIM…MACI).

This sequence belongs to the UPF0114 family.

It localises to the cell membrane. This chain is UPF0114 protein in repA1-repA2 intergenic region, found in Buchnera aphidicola subsp. Baizongia pistaciae (strain Bp).